The sequence spans 460 residues: Retinoic acid receptor alpha (460 aa).

Residues 1-87 form a modulating region; that stretch reads MASNSSSCPT…PPPLPRIYKP (87 aa). Residues 46 to 78 are disordered; that stretch reads HQLPVSGYSTPSPATVETQSTSSEEIVPSPPSP. Residues 52–69 are compositionally biased toward polar residues; that stretch reads GYSTPSPATVETQSTSSE. 2 consecutive NR C4-type zinc fingers follow at residues 88–108 and 124–148; these read CFVCQDKSSGYHYGVSACEGC and CHRDKNCIINKVTRNRCQYCRLQKC. The nuclear receptor DNA-binding region spans 88–153; that stretch reads CFVCQDKSSG…RLQKCFEVGM (66 aa). The hinge stretch occupies residues 154-182; that stretch reads SKESVRNDRNKKKKDVPKTECSESYIVTP. The 235-residue stretch at 183 to 417 folds into the NR LBD domain; sequence EVEELIEKVR…PLIQEMLENS (235 aa). The 9aaTAD signature appears at 408 to 416; that stretch reads PLIQEMLEN. The tract at residues 418-460 is disordered; the sequence is EGMDTLGGQPGGPRTGGLGPPPGSCSPSLSPSSTRSSPATHSP. Residues 425–435 show a composition bias toward gly residues; sequence GQPGGPRTGGL. A compositionally biased stretch (low complexity) spans 442 to 460; it reads CSPSLSPSSTRSSPATHSP.

Belongs to the nuclear hormone receptor family. NR1 subfamily. Heterodimer; with an RXR molecule. Binds DNA preferentially as a RAR/RXR heterodimer. As to expression, ubiquitous.

It localises to the nucleus. Receptor for retinoic acid. Retinoic acid receptors bind as heterodimers to their target response elements in response to their ligands, all-trans or 9-cis retinoic acid, and regulate gene expression in various biological processes. The RAR/RXR heterodimers bind to the retinoic acid response elements (RARE) composed of tandem 5'-AGGTCA-3' sites known as DR1-DR5. Required for hindbrain patterning and appears to be required for skin development. The polypeptide is Retinoic acid receptor alpha (RARA) (Gallus gallus (Chicken)).